We begin with the raw amino-acid sequence, 153 residues long: Small ribosomal subunit protein uS9 (153 aa).

Residues 122-153 form a disordered region; sequence KKAGFLTRDPRSTERKKYGLKKARKAPQYSKR. Positions 129–138 are enriched in basic and acidic residues; it reads RDPRSTERKK. Over residues 139 to 153 the composition is skewed to basic residues; the sequence is YGLKKARKAPQYSKR.

The protein belongs to the universal ribosomal protein uS9 family.

This Mycobacterium leprae (strain TN) protein is Small ribosomal subunit protein uS9 (rpsI).